Reading from the N-terminus, the 316-residue chain is Probable cell division protein WhiA (316 aa).

The H-T-H motif DNA-binding region spans 276-309; that stretch reads SLEELGKIAEPQITKDAIAGRIRRLLQLAEKTEK.

The protein belongs to the WhiA family.

Functionally, involved in cell division and chromosome segregation. The chain is Probable cell division protein WhiA from Bifidobacterium longum subsp. infantis (strain ATCC 15697 / DSM 20088 / JCM 1222 / NCTC 11817 / S12).